We begin with the raw amino-acid sequence, 1657 residues long: Ras GTPase-activating-like protein IQGAP1 (1657 aa).

Ser2 is subject to N-acetylserine. Ser2 carries the phosphoserine modification. The region spanning 44–159 (LCHLEEAKRW…YCIHALSLYL (116 aa)) is the Calponin-homology (CH) domain. Tyr172 carries the post-translational modification Phosphotyrosine. Ser330 is subject to Phosphoserine. The WW domain maps to 679–712 (GDNNSKWVKHWVKGGYYYYHNLETQEGGWDEPPN). 4 IQ domains span residues 745-774 (NEGL…FLKK), 775-804 (QIPA…YLRS), 805-834 (HKDE…YFRD), and 835-864 (HIND…AEDP). Residues 956–1274 (GGLKALSKEK…FFQTACDVPE (319 aa)) are C1. In terms of domain architecture, Ras-GAP spans 1020–1269 (YLLLRLFKTA…QKFRRFFQTA (250 aa)). Positions 1276 to 1657 (QDKFNVDEYS…FLLNKKFYGK (382 aa)) are C2. A disordered region spans residues 1410-1448 (TPATSEQEAEHQRAMQRRAIRDAKTPDKMKKSKSVKEDS). The segment covering 1417–1448 (EAEHQRAMQRRAIRDAKTPDKMKKSKSVKEDS) has biased composition (basic and acidic residues). Ser1441 carries the phosphoserine; by PKC modification. Ser1443 is modified (phosphoserine; by PKC/PRKCE).

As to quaternary structure, interacts with CDC42; the interaction is demonstrated with IQGAP1 in GTP-bound and in nucleotide-free state. Interacts with RAC1. Does not interact with RHOA. Interacts with TSG101. Interacts with PAK6. Interacts with TMEM14B; this interaction increases IQGAP1 phosphorylation and induces its nuclear translocation. Interacts with SASH1. Interacts with PJVK. Interacts with SLC26A4; this interaction enhances the chloride-bicarbonate exchange activity of SLC26A4. Interacts with SVEP1. Interacts with ILK; the interaction is required for localization of IQGAP to the cell cortex. In terms of assembly, (Microbial infection) Interacts with ebolavirus vp40. (Microbial infection) Interacts with human cytomegalovirus protein UL5. As to quaternary structure, (Microbial infection) Interacts with C.jejuni invasion antigen D (CiaD). In terms of processing, phosphorylation of Ser-1443 by PKC/PRKCE prevents interaction between C1 and C2, allowing binding of nucleotide-free CDC42. Ser-1443 phosphorylation enhances the ability to promote neurite outgrowth. In terms of tissue distribution, expressed in the placenta, lung, and kidney. A lower level expression is seen in the heart, liver, skeletal muscle and pancreas.

The protein resides in the cell membrane. It localises to the nucleus. It is found in the cytoplasm. Its subcellular location is the cell cortex. The protein localises to the apical cell membrane. The protein resides in the basolateral cell membrane. Functionally, plays a crucial role in regulating the dynamics and assembly of the actin cytoskeleton. Recruited to the cell cortex by interaction with ILK which allows it to cooperate with its effector DIAPH1 to locally stabilize microtubules and allow stable insertion of caveolae into the plasma membrane. Binds to activated CDC42 but does not stimulate its GTPase activity. Associates with calmodulin. May promote neurite outgrowth. May play a possible role in cell cycle regulation by contributing to cell cycle progression after DNA replication arrest. In Homo sapiens (Human), this protein is Ras GTPase-activating-like protein IQGAP1 (IQGAP1).